A 32-amino-acid polypeptide reads, in one-letter code: Photosystem II reaction center protein Psb30 (32 aa).

A helical transmembrane segment spans residues 3–23 (IVIVQLGSLALITLAGPIIIV).

Belongs to the Psb30/Ycf12 family. PSII is composed of 1 copy each of membrane proteins PsbA, PsbB, PsbC, PsbD, PsbE, PsbF, PsbH, PsbI, PsbJ, PsbK, PsbL, PsbM, PsbT, PsbY, PsbZ, Psb30/Ycf12, peripheral proteins of the oxygen-evolving complex and a large number of cofactors. It forms dimeric complexes.

Its subcellular location is the plastid. It is found in the chloroplast thylakoid membrane. In terms of biological role, a core subunit of photosystem II (PSII), probably helps stabilize the reaction center. The polypeptide is Photosystem II reaction center protein Psb30 (Euglena viridis (Cercaria viridis)).